A 105-amino-acid chain; its full sequence is Small ribosomal subunit protein uS10 (105 aa).

It belongs to the universal ribosomal protein uS10 family. Part of the 30S ribosomal subunit.

In terms of biological role, involved in the binding of tRNA to the ribosomes. This is Small ribosomal subunit protein uS10 from Acidobacterium capsulatum (strain ATCC 51196 / DSM 11244 / BCRC 80197 / JCM 7670 / NBRC 15755 / NCIMB 13165 / 161).